The following is a 212-amino-acid chain: Ribosomal RNA small subunit methyltransferase G (212 aa).

S-adenosyl-L-methionine is bound by residues G73, I127–E128, and R143.

The protein belongs to the methyltransferase superfamily. RNA methyltransferase RsmG family.

It localises to the cytoplasm. The enzyme catalyses guanosine(527) in 16S rRNA + S-adenosyl-L-methionine = N(7)-methylguanosine(527) in 16S rRNA + S-adenosyl-L-homocysteine. Its function is as follows. Specifically methylates the N7 position of guanine in position 527 of 16S rRNA. The sequence is that of Ribosomal RNA small subunit methyltransferase G from Methylobacterium nodulans (strain LMG 21967 / CNCM I-2342 / ORS 2060).